The chain runs to 244 residues: ATP synthase subunit a (244 aa).

The next 7 membrane-spanning stretches (helical) occupy residues 20–40 (FFDI…VIVI), 81–101 (GILF…LNVM), 113–133 (QLLV…IWGF), 140–160 (FLNI…LVFI), 176–196 (LFAN…AAIY), 202–222 (FIGI…LGIA), and 223–243 (FLQA…IINL).

It belongs to the ATPase A chain family. F-type ATPases have 2 components, CF(1) - the catalytic core - and CF(0) - the membrane proton channel. CF(1) has five subunits: alpha(3), beta(3), gamma(1), delta(1), epsilon(1). CF(0) has three main subunits: a, b and c.

The protein resides in the mitochondrion inner membrane. Functionally, mitochondrial membrane ATP synthase (F(1)F(0) ATP synthase or Complex V) produces ATP from ADP in the presence of a proton gradient across the membrane which is generated by electron transport complexes of the respiratory chain. F-type ATPases consist of two structural domains, F(1) - containing the extramembraneous catalytic core and F(0) - containing the membrane proton channel, linked together by a central stalk and a peripheral stalk. During catalysis, ATP synthesis in the catalytic domain of F(1) is coupled via a rotary mechanism of the central stalk subunits to proton translocation. Key component of the proton channel; it may play a direct role in the translocation of protons across the membrane. The chain is ATP synthase subunit a (atp6) from Dictyostelium discoideum (Social amoeba).